A 1458-amino-acid chain; its full sequence is RNA-directed RNA polymerase P1 (1458 aa).

The segment at 148 to 168 (LSQDDRDEKGNDNREEEDVKN) is disordered. The 209-residue stretch at 686 to 894 (VGIGFATIYQ…KTVISHISGE (209 aa)) folds into the RdRp catalytic domain. Positions 971–993 (DESIENKPNRRGSKAKARSTKTN) are disordered. Residues 979 to 989 (NRRGSKAKARS) are compositionally biased toward basic residues.

The protein belongs to the reoviridae RNA-directed RNA polymerase family.

The protein resides in the virion. It is found in the host cytoplasm. The enzyme catalyses RNA(n) + a ribonucleoside 5'-triphosphate = RNA(n+1) + diphosphate. Functionally, RNA-directed RNA polymerase that is involved in both transcription and genome replication. Together with the capping enzyme P5 and protein P7, forms an enzyme complex positioned near the channels situated at each of the five-fold vertices of the core. This is RNA-directed RNA polymerase P1 from Nephotettix cincticeps (Green rice leafhopper).